We begin with the raw amino-acid sequence, 157 residues long: Large ribosomal subunit protein uL15 (157 aa).

Positions 1–13 are enriched in basic and acidic residues; it reads MKLNDLRDKDGAT. Residues 1–39 form a disordered region; the sequence is MKLNDLRDKDGATHSKKRLGRGIGSGSGKTAGRGVKGQK. The span at 21-35 shows a compositional bias: gly residues; sequence RGIGSGSGKTAGRGV.

The protein belongs to the universal ribosomal protein uL15 family. Part of the 50S ribosomal subunit.

Binds to the 23S rRNA. In Mesorhizobium japonicum (strain LMG 29417 / CECT 9101 / MAFF 303099) (Mesorhizobium loti (strain MAFF 303099)), this protein is Large ribosomal subunit protein uL15.